A 252-amino-acid polypeptide reads, in one-letter code: 5'-nucleotidase SurE (252 aa).

Residues D8, D9, S39, and N91 each coordinate a divalent metal cation.

It belongs to the SurE nucleotidase family. It depends on a divalent metal cation as a cofactor.

It is found in the cytoplasm. It carries out the reaction a ribonucleoside 5'-phosphate + H2O = a ribonucleoside + phosphate. Its function is as follows. Nucleotidase that shows phosphatase activity on nucleoside 5'-monophosphates. This is 5'-nucleotidase SurE from Legionella pneumophila (strain Paris).